Reading from the N-terminus, the 295-residue chain is UDP-N-acetylenolpyruvoylglucosamine reductase (295 aa).

An FAD-binding PCMH-type domain is found at 23–188 (KVGGPADFLA…ISAKFALKPG (166 aa)). R167 is a catalytic residue. S217 (proton donor) is an active-site residue. Residue E287 is part of the active site.

This sequence belongs to the MurB family. It depends on FAD as a cofactor.

Its subcellular location is the cytoplasm. It carries out the reaction UDP-N-acetyl-alpha-D-muramate + NADP(+) = UDP-N-acetyl-3-O-(1-carboxyvinyl)-alpha-D-glucosamine + NADPH + H(+). It participates in cell wall biogenesis; peptidoglycan biosynthesis. Cell wall formation. The chain is UDP-N-acetylenolpyruvoylglucosamine reductase from Streptococcus pyogenes serotype M1.